We begin with the raw amino-acid sequence, 213 residues long: MKFSEEKNVSNNPTNFEGGLDSRKVGENRRALGVINQNLVVEGRPYPCVVNKRALSERNDVCEKKQADPVHRPITRRFAAKIASTKTSNAEGTTKRSNLAKSSSNGFGDFIFVDDEHKPVEDQPVPMALEQTEPMHSESDQMEEVEMEDIMEEPVMDIDTPDANDPLAVAEYIEDLYSYYRKVESTSCVSPNYMAQQFDINERMRAILVDCLL.

Positions 1-23 are disordered; that stretch reads MKFSEEKNVSNNPTNFEGGLDSR.

It belongs to the cyclin family. Cyclin AB subfamily. Interacts with the CDC2 protein kinase to form a serine/threonine kinase holoenzyme complex also known as maturation promoting factor (MPF). The cyclin subunit imparts substrate specificity to the complex. In terms of tissue distribution, only expressed in organs with dividing cells.

In terms of biological role, essential for the control of the cell cycle at the G2/M (mitosis) transition. In Medicago sativa (Alfalfa), this protein is G2/mitotic-specific cyclin-1.